The following is an 833-amino-acid chain: Leucine--tRNA ligase (833 aa).

The 'HIGH' region motif lies at P41–H52. The short motif at K610–S614 is the 'KMSKS' region element. K613 contributes to the ATP binding site.

This sequence belongs to the class-I aminoacyl-tRNA synthetase family.

It localises to the cytoplasm. The enzyme catalyses tRNA(Leu) + L-leucine + ATP = L-leucyl-tRNA(Leu) + AMP + diphosphate. This is Leucine--tRNA ligase from Streptococcus pneumoniae (strain Hungary19A-6).